A 935-amino-acid chain; its full sequence is Phosphoenolpyruvate carboxylase (935 aa).

Active-site residues include H161 and K593.

This sequence belongs to the PEPCase type 1 family. Mg(2+) is required as a cofactor.

It carries out the reaction oxaloacetate + phosphate = phosphoenolpyruvate + hydrogencarbonate. Forms oxaloacetate, a four-carbon dicarboxylic acid source for the tricarboxylic acid cycle. The polypeptide is Phosphoenolpyruvate carboxylase (Mycolicibacterium paratuberculosis (strain ATCC BAA-968 / K-10) (Mycobacterium paratuberculosis)).